Consider the following 397-residue polypeptide: Putative gustatory receptor 93c (397 aa).

Topologically, residues 1–12 are cytoplasmic; the sequence is MIERLKKVSLPA. Residues 13–33 form a helical membrane-spanning segment; the sequence is LSAFILFCSCHYGRILGVICF. Residues 34 to 87 lie on the Extracellular side of the membrane; it reads DIGQRTSDDSLVVRNRHQFKWFCLSCRLISVTAVCCFCAPYVADIEDPYERLLQ. Residues 88-108 form a helical membrane-spanning segment; the sequence is CFRLSASLICGICIIVVQVCY. The Cytoplasmic portion of the chain corresponds to 109–141; that stretch reads EKELLRMIISFLRLFRRVRRLSSLKRIGFGGKR. A helical transmembrane segment spans residues 142 to 162; sequence EFFLLLFKFICLVYELYSEIC. Residues 163 to 179 lie on the Extracellular side of the membrane; sequence QLWHLPDSLSLFATLCE. The helical transmembrane segment at 180-200 threads the bilayer; the sequence is IFLEIGSLMIIHIGFVGYLSV. Over 201–266 the chain is Cytoplasmic; sequence AALYSEVNSF…RTFHRLLELP (66 aa). The helical transmembrane segment at 267 to 287 threads the bilayer; that stretch reads VLIILLGKIFATTILSYEVII. The Extracellular segment spans residues 288 to 295; it reads RPELYARK. Residues 296–316 form a helical membrane-spanning segment; sequence IGMWGLVVKSFADVILLTLAV. Residues 317 to 371 are Cytoplasmic-facing; sequence HEAVSSSRMMRRLSLENFPITDHKAWHMKWEMFLSRLNFFEFRVRPLGLFEVSNE. Residues 372–392 form a helical membrane-spanning segment; the sequence is VILLFLSSMITYFTYVVQYGI. The Extracellular segment spans residues 393 to 397; the sequence is QTNRL.

Belongs to the insect chemoreceptor superfamily. Gustatory receptor (GR) family. Gr93a subfamily. As to expression, in larvae, is expressed in neurons of the posterior pharyngeal sense organ.

It is found in the cell membrane. Functionally, probable gustatory receptor which mediates acceptance or avoidance behavior, depending on its substrates. The sequence is that of Putative gustatory receptor 93c (Gr93c) from Drosophila melanogaster (Fruit fly).